The chain runs to 86 residues: Omega-theraphotoxin-Hhn1a 1 (86 aa).

Residues 1–21 form the signal peptide; sequence MKSIVFVALFGLALLAVVCSA. Positions 22-50 are excised as a propeptide; sequence SEDAHKELLKEVVRAMVVDKTDAVQAEER. Disulfide bonds link cysteine 52-cysteine 66, cysteine 59-cysteine 71, and cysteine 65-cysteine 78.

It belongs to the neurotoxin 10 (Hwtx-1) family. 17 (Hntx-9) subfamily. As to expression, expressed by the venom gland.

It is found in the secreted. Functionally, ion channel inhibitor. In Cyriopagopus hainanus (Chinese bird spider), this protein is Omega-theraphotoxin-Hhn1a 1.